The following is an 87-amino-acid chain: UPF0473 protein Daud_0916 (87 aa).

Belongs to the UPF0473 family.

This chain is UPF0473 protein Daud_0916, found in Desulforudis audaxviator (strain MP104C).